A 426-amino-acid polypeptide reads, in one-letter code: 3-phosphoshikimate 1-carboxyvinyltransferase (426 aa).

The 3-phosphoshikimate site is built by Lys-22, Ser-23, and Arg-27. Residue Lys-22 participates in phosphoenolpyruvate binding. Phosphoenolpyruvate-binding residues include Gly-96 and Arg-124. Positions 170, 171, 172, 198, 314, 337, and 341 each coordinate 3-phosphoshikimate. Residue Gln-172 coordinates phosphoenolpyruvate. The Proton acceptor role is filled by Asp-314. Phosphoenolpyruvate contacts are provided by Arg-345, Arg-387, and Lys-412.

The protein belongs to the EPSP synthase family. Monomer.

The protein resides in the cytoplasm. It catalyses the reaction 3-phosphoshikimate + phosphoenolpyruvate = 5-O-(1-carboxyvinyl)-3-phosphoshikimate + phosphate. It participates in metabolic intermediate biosynthesis; chorismate biosynthesis; chorismate from D-erythrose 4-phosphate and phosphoenolpyruvate: step 6/7. In terms of biological role, catalyzes the transfer of the enolpyruvyl moiety of phosphoenolpyruvate (PEP) to the 5-hydroxyl of shikimate-3-phosphate (S3P) to produce enolpyruvyl shikimate-3-phosphate and inorganic phosphate. The protein is 3-phosphoshikimate 1-carboxyvinyltransferase of Shewanella piezotolerans (strain WP3 / JCM 13877).